A 92-amino-acid polypeptide reads, in one-letter code: Probable Fe(2+)-trafficking protein (92 aa).

Belongs to the Fe(2+)-trafficking protein family.

Functionally, could be a mediator in iron transactions between iron acquisition and iron-requiring processes, such as synthesis and/or repair of Fe-S clusters in biosynthetic enzymes. The chain is Probable Fe(2+)-trafficking protein from Shewanella loihica (strain ATCC BAA-1088 / PV-4).